The chain runs to 79 residues: Acyl carrier protein (79 aa).

One can recognise a Carrier domain in the interval 2–77 (SDIEARVKKI…NAVDYATKNQ (76 aa)). Serine 37 carries the post-translational modification O-(pantetheine 4'-phosphoryl)serine.

Belongs to the acyl carrier protein (ACP) family. 4'-phosphopantetheine is transferred from CoA to a specific serine of apo-ACP by AcpS. This modification is essential for activity because fatty acids are bound in thioester linkage to the sulfhydryl of the prosthetic group.

It is found in the cytoplasm. Its pathway is lipid metabolism; fatty acid biosynthesis. In terms of biological role, carrier of the growing fatty acid chain in fatty acid biosynthesis. The chain is Acyl carrier protein from Variovorax paradoxus (strain S110).